Reading from the N-terminus, the 201-residue chain is uncharacterized protein (201 aa).

Residues 1–28 form the signal peptide; the sequence is MMTFKNLRYGLSSSVVLAASLFSVLSYA.

This sequence belongs to the fimbrial protein family.

It localises to the fimbrium. In terms of biological role, part of the yadCKLM-htrE-yadVN fimbrial operon. Could contribute to adhesion to various surfaces in specific environmental niches. This is an uncharacterized protein from Escherichia coli (strain K12).